Here is a 525-residue protein sequence, read N- to C-terminus: Sucrose transport protein (525 aa).

Over 1-37 (MAGRNIKNGENNKIAGSSLHLEKNPTTPPEAEATLKK) the chain is Cytoplasmic. 12 helical membrane-spanning segments follow: residues 38 to 58 (LGLV…QLSL), 72 to 92 (WAAY…PLVG), 107 to 127 (PFIA…GFAA), 145 to 165 (AIAV…TLQG), 184 to 204 (YANA…YAAG), 230 to 250 (SCFF…LSVV), 295 to 315 (MLIL…FLLF), 338 to 358 (GVHA…VMSL), 373 to 393 (LWGI…LVTK), 422 to 442 (LAIF…PFAL), 455 to 475 (GLSL…VSVT), and 488 to 508 (LPAF…SFTL). Residues 509–525 (LPSPPPEAKIGGSMGGH) lie on the Cytoplasmic side of the membrane.

Belongs to the glycoside-pentoside-hexuronide (GPH) cation symporter transporter (TC 2.A.2.4) family.

Its subcellular location is the membrane. It participates in glycan biosynthesis; sucrose metabolism. Functionally, responsible for the transport of sucrose into the cell, with the concomitant uptake of protons (symport system). Can also transport maltose at a lesser rate. This Spinacia oleracea (Spinach) protein is Sucrose transport protein.